Consider the following 503-residue polypeptide: Putative aldehyde dehydrogenase-like protein C9E9.09c (503 aa).

247-252 (GSTGVG) is an NAD(+) binding site. Ser248 bears the Phosphoserine mark. The active-site Proton acceptor is Glu270. Cys304 serves as the catalytic Nucleophile. Phosphoserine is present on Ser501.

The protein belongs to the aldehyde dehydrogenase family.

The chain is Putative aldehyde dehydrogenase-like protein C9E9.09c from Schizosaccharomyces pombe (strain 972 / ATCC 24843) (Fission yeast).